The primary structure comprises 332 residues: MLWLFQSLLFVFCFGPGNVVSQSSLTPLMVNGILGESVTLPLEFPAGEKVNFITWLFNETSLAFIVPHETKSPEIHVTNPKQGKRLNFTQSYSLQLSNLKMEDTGSYRAQISTKTSAKLSSYTLRILRQLRNIQVTNHSQLFQNMTCELHLTCSVEDADDNVSFRWEALGNTLSSQPNLTVSWDPRISSEQDYTCIAENAVSNLSFSVSAQKLCEDVKIQYTDTKMILFMVSGICIVFGFIILLLLVLRKRRDSLSLSTQRTQGPAESARNLEYVSVSPTNNTVYASVTHSNRETEIWTPRENDTITIYSTINHSKESKPTFSRATALDNVV.

The signal sequence occupies residues 1 to 21 (MLWLFQSLLFVFCFGPGNVVS). Residues 22–226 (QSSLTPLMVN…VKIQYTDTKM (205 aa)) lie on the Extracellular side of the membrane. The Ig-like V-type domain occupies 35–120 (GESVTLPLEF…ISTKTSAKLS (86 aa)). N-linked (GlcNAc...) asparagine glycans are attached at residues Asn58, Asn87, Asn137, Asn144, Asn161, Asn178, and Asn203. Residues 132 to 209 (NIQVTNHSQL…AVSNLSFSVS (78 aa)) enclose the Ig-like C2-type domain. Intrachain disulfides connect Cys147–Cys214 and Cys153–Cys195. The chain crosses the membrane as a helical span at residues 227–247 (ILFMVSGICIVFGFIILLLLV). Over 248-331 (LRKRRDSLSL…FSRATALDNV (84 aa)) the chain is Cytoplasmic. Tyr274 is modified (phosphotyrosine). Phosphoserine is present on Ser278. 2 short sequence motifs (ITSM) span residues 283-288 (TVYASV) and 307-312 (TIYSTI). Tyr309 is subject to Phosphotyrosine.

Homodimer. Interacts with PTN6. Interacts (phosphorylated) with PTN11. Interacts (phosphorylated on tyrosine residues) with SH2D1A/SAP and SH2D1B/EAT2; SH2D1A and SH2D1B can associate with the same SLAMF6 molecule; interaction with SH2D1B is mediated by ITSM 2. Post-translationally, phosphorylation in NK cells upon engagment by SLAMF6-expressing target cells is leading to receptor activation. As to expression, expressed by all (resting and activated) natural killer cells (NK), T- and B-lymphocytes. Increased surface expression on T-cells of systemic lupus erythematosus (SLE) patients.

The protein localises to the cell membrane. Functionally, self-ligand receptor of the signaling lymphocytic activation molecule (SLAM) family. SLAM receptors triggered by homo- or heterotypic cell-cell interactions are modulating the activation and differentiation of a wide variety of immune cells and thus are involved in the regulation and interconnection of both innate and adaptive immune response. Activities are controlled by presence or absence of small cytoplasmic adapter proteins, SH2D1A/SAP and/or SH2D1B/EAT-2. Triggers cytolytic activity only in natural killer cells (NK) expressing high surface densities of natural cytotoxicity receptors. Positive signaling in NK cells implicates phosphorylation of VAV1. NK cell activation seems to depend on SH2D1B and not on SH2D1A. In conjunction with SLAMF1 controls the transition between positive selection and the subsequent expansion and differentiation of the thymocytic natural killer T (NKT) cell lineage. Promotes T-cell differentiation into a helper T-cell Th17 phenotype leading to increased IL-17 secretion; the costimulatory activity requires SH2D1A. Promotes recruitment of RORC to the IL-17 promoter. In conjunction with SLAMF1 and CD84/SLAMF5 may be a negative regulator of the humoral immune response. In the absence of SH2D1A/SAP can transmit negative signals to CD4(+) T-cells and NKT cells. Negatively regulates germinal center formation by inhibiting T-cell:B-cell adhesion; the function probably implicates increased association with PTPN6/SHP-1 via ITSMs in absence of SH2D1A/SAP. However, reported to be involved in maintaining B-cell tolerance in germinal centers and in preventing autoimmunity. The polypeptide is SLAM family member 6 (SLAMF6) (Homo sapiens (Human)).